Reading from the N-terminus, the 212-residue chain is Uridine kinase (212 aa).

13–20 (GASASGKS) contributes to the ATP binding site.

Belongs to the uridine kinase family.

It is found in the cytoplasm. It carries out the reaction uridine + ATP = UMP + ADP + H(+). It catalyses the reaction cytidine + ATP = CMP + ADP + H(+). It participates in pyrimidine metabolism; CTP biosynthesis via salvage pathway; CTP from cytidine: step 1/3. Its pathway is pyrimidine metabolism; UMP biosynthesis via salvage pathway; UMP from uridine: step 1/1. This Shewanella oneidensis (strain ATCC 700550 / JCM 31522 / CIP 106686 / LMG 19005 / NCIMB 14063 / MR-1) protein is Uridine kinase.